Reading from the N-terminus, the 254-residue chain is Proteasome subunit alpha (254 aa).

Residues P232–S254 are disordered.

It belongs to the peptidase T1A family. In terms of assembly, the 20S proteasome core is composed of 14 alpha and 14 beta subunits that assemble into four stacked heptameric rings, resulting in a barrel-shaped structure. The two inner rings, each composed of seven catalytic beta subunits, are sandwiched by two outer rings, each composed of seven alpha subunits. The catalytic chamber with the active sites is on the inside of the barrel. Has a gated structure, the ends of the cylinder being occluded by the N-termini of the alpha-subunits. Is capped by the proteasome-associated ATPase, ARC.

It localises to the cytoplasm. Its pathway is protein degradation; proteasomal Pup-dependent pathway. With respect to regulation, the formation of the proteasomal ATPase ARC-20S proteasome complex, likely via the docking of the C-termini of ARC into the intersubunit pockets in the alpha-rings, may trigger opening of the gate for substrate entry. Interconversion between the open-gate and close-gate conformations leads to a dynamic regulation of the 20S proteasome proteolysis activity. Component of the proteasome core, a large protease complex with broad specificity involved in protein degradation. The polypeptide is Proteasome subunit alpha (Mycolicibacterium vanbaalenii (strain DSM 7251 / JCM 13017 / BCRC 16820 / KCTC 9966 / NRRL B-24157 / PYR-1) (Mycobacterium vanbaalenii)).